We begin with the raw amino-acid sequence, 414 residues long: Cytochrome P450 GfsF (414 aa).

A disordered region spans residues 1 to 32; that stretch reads MTDTTLVEAGDPAEDAPEWPMKRDTGCPFDPP. Heme b contacts are provided by His-75, His-107, Arg-111, Arg-303, His-361, and Cys-363.

It belongs to the cytochrome P450 family. In terms of assembly, monomer. Heme b serves as cofactor.

Its pathway is antibiotic biosynthesis. Its function is as follows. Involved in the synthesis of the 16-membered macrolide antibiotics FD-891 and FD-892. Consecutively catalyzes epoxidation of C8-C9 and then hydroxylation at C10 to convert 25-O-methyl-FD-892 to FD-891. Consecutively catalyzes epoxidation of C8-C9 and then hydroxylation at C10 to convert 8,9-epoxy-FD-892 to 25-O-demethyl-FD-891 as well as converting 25-oxo-FD-892 to 8,9-epoxy-25-oxo-FD-892 and 8,9-epoxy-10-hydroxy-25-oxo-FD-892. In vitro is furnished with P.putida putidaredoxin and putidaredoxin reductase to provide the required two-electron reduction. The polypeptide is Cytochrome P450 GfsF (Streptomyces halstedii).